A 653-amino-acid polypeptide reads, in one-letter code: Epithelial sodium channel subunit gamma (653 aa).

Over 1–55 (MAPGEKIKAKIKKNLPVKGPQAPTIKELMRWYCLNTNTHGCRRIVVSPGRLRRLL) the chain is Cytoplasmic. Residues 56–76 (WIAFTLTAVGLIFWQCALLVF) traverse the membrane as a helical segment. Topologically, residues 77 to 538 (SFYTVSVSIK…EMLLSNFGGQ (462 aa)) are extracellular. Disulfide bonds link C100-C287, C211-C218, C264-C271, C376-C461, C398-C457, C402-C453, C411-C438, and C413-C427. Residues 137 to 225 (RKQRDTESWS…SDCATYTFSS (89 aa)) form a gating release of inhibition by proteolysis (GRIP); protease-sensitive region that is responsible for the proteolytic activation of the channel region. The N-linked (GlcNAc...) asparagine glycan is linked to N213. N275 carries an N-linked (GlcNAc...) asparagine glycan. N501 is a glycosylation site (N-linked (GlcNAc...) asparagine). Residues 539–559 (LGLWMSCSVVCVIEIIEVFFI) form a helical membrane-spanning segment. Topologically, residues 560–653 (DSLSIVTRRQ…LADTRLPDEP (94 aa)) are cytoplasmic. A disordered region spans residues 582 to 632 (AAPSAEAPSGAQGQENPALEIDDDLPTFTSALSLPPAPGAQVPGTPPPRYN). A PY motif; recruits WW domain-containing proteins and is thereby required for ubiquitination and inhibition of the channel by NEDD4 and NEDD4L motif is present at residues 627–631 (PPPRY).

It belongs to the amiloride-sensitive sodium channel (TC 1.A.6) family. SCNN1G subfamily. As to quaternary structure, component of the heterotrimeric epithelial sodium channel (ENaC) composed of an alpha/SCNN1A, a beta/SCNN1B and a gamma/SCNN1G subunit. Interacts with WWP1 (via WW domains). Interacts with WWP2 (via WW domains); inhibits the channel. Interacts with the full-length immature form of PCSK9 (pro-PCSK9); inhibits ENaC by promoting its proteasomal degradation. Interacts with BPIFA1; the interaction is indirect via SCNN1B and inhibits the proteolytic maturation of SCNN1A and SCNN1G and the activation of ENaC. Phosphorylated on serine and threonine residues. Aldosterone and insulin increase the basal level of phosphorylation. In terms of processing, ubiquitinated. Can be ubiquitinated at multiple sites and undergo monoubiquitination and polyubiquitination. Ubiquitination by NEDD4 or NEDD4L inhibits the ENaC channel through endocytosis, intracellular retention and degradation of its individual subunits. Post-translationally, ENaC is activated through the proteolytic maturation of its subunits. Furin cleaves the SCNN1G subunit first, followed by cleavage by prostasin (PRSS8), which results in a stepwise increase in the open probability of the channel due to the release of an inhibitory tract. BPIFA1, which is recruited by the SCNN1B subunit, prevents the proteolytic activation of ENaC. N-glycosylated. N-linked glycans are processed to complex type during ENaC complex assembly and transport to the plasma membrane.

It localises to the apical cell membrane. It catalyses the reaction Na(+)(in) = Na(+)(out). Originally identified and characterized by its inhibition by the diuretic drug amiloride. This is one of the three pore-forming subunits of the heterotrimeric epithelial sodium channel (ENaC), a critical regulator of sodium balance and fluid homeostasis. ENaC operates in epithelial tissues, where it mediates the electrodiffusion of sodium ions from extracellular fluid through the apical membrane of cells, with water following osmotically. It plays a key role in maintaining sodium homeostasis through electrogenic sodium reabsorption in the kidneys. Additionally, ENaC is essential for airway surface liquid homeostasis, which is crucial for proper mucus clearance. The sequence is that of Epithelial sodium channel subunit gamma from Oryctolagus cuniculus (Rabbit).